The primary structure comprises 154 residues: Superoxide dismutase [Cu-Zn] (154 aa).

Cu cation is bound by residues His47, His49, and His64. The cysteines at positions 58 and 147 are disulfide-linked. The tract at residues Gly62 to Lys89 is disordered. Zn(2+) contacts are provided by His64, His72, His81, and Asp84. His121 contributes to the Cu cation binding site. Position 144 (Arg144) interacts with substrate.

The protein belongs to the Cu-Zn superoxide dismutase family. In terms of assembly, homodimer. Cu cation is required as a cofactor. The cofactor is Zn(2+).

The protein localises to the cytoplasm. The enzyme catalyses 2 superoxide + 2 H(+) = H2O2 + O2. In terms of biological role, destroys radicals which are normally produced within the cells and which are toxic to biological systems. The chain is Superoxide dismutase [Cu-Zn] (SOD1) from Yarrowia lipolytica (strain CLIB 122 / E 150) (Yeast).